A 127-amino-acid polypeptide reads, in one-letter code: ALK and LTK ligand 1 (127 aa).

Residues 1–27 (MWLTKPSTPVSALLLLALALSPPGTQG) form the signal peptide. Intrachain disulfides connect C88/C124 and C102/C111.

The protein belongs to the ALKAL family.

It is found in the secreted. The protein localises to the cell membrane. Cytokine that acts as a physiological ligand for receptor tyrosine kinase LTK, leading to its activation. Monomeric ALKAL1 binds to LTK, leading to LTK homodimerization and activation. In contrast to ALKAL2, does not act as a potent physiological ligand for ALK. In Mus musculus (Mouse), this protein is ALK and LTK ligand 1.